We begin with the raw amino-acid sequence, 637 residues long: 1-deoxy-D-xylulose-5-phosphate synthase (637 aa).

Residues histidine 76 and 117 to 119 (GHS) each bind thiamine diphosphate. Aspartate 148 provides a ligand contact to Mg(2+). Thiamine diphosphate-binding positions include 149 to 150 (GA), asparagine 177, tyrosine 294, and glutamate 381. Asparagine 177 contributes to the Mg(2+) binding site.

This sequence belongs to the transketolase family. DXPS subfamily. As to quaternary structure, homodimer. Mg(2+) is required as a cofactor. Requires thiamine diphosphate as cofactor.

It catalyses the reaction D-glyceraldehyde 3-phosphate + pyruvate + H(+) = 1-deoxy-D-xylulose 5-phosphate + CO2. It participates in metabolic intermediate biosynthesis; 1-deoxy-D-xylulose 5-phosphate biosynthesis; 1-deoxy-D-xylulose 5-phosphate from D-glyceraldehyde 3-phosphate and pyruvate: step 1/1. Functionally, catalyzes the acyloin condensation reaction between C atoms 2 and 3 of pyruvate and glyceraldehyde 3-phosphate to yield 1-deoxy-D-xylulose-5-phosphate (DXP). The sequence is that of 1-deoxy-D-xylulose-5-phosphate synthase from Neisseria gonorrhoeae (strain NCCP11945).